A 498-amino-acid polypeptide reads, in one-letter code: ATP synthase subunit beta, chloroplastic (498 aa).

Threonine 6 bears the Phosphothreonine mark. Serine 13 carries the post-translational modification Phosphoserine. 172-179 contacts ATP; it reads GGAGVGKT.

Belongs to the ATPase alpha/beta chains family. F-type ATPases have 2 components, CF(1) - the catalytic core - and CF(0) - the membrane proton channel. CF(1) has five subunits: alpha(3), beta(3), gamma(1), delta(1), epsilon(1). CF(0) has four main subunits: a(1), b(1), b'(1) and c(9-12).

It is found in the plastid. The protein resides in the chloroplast thylakoid membrane. It catalyses the reaction ATP + H2O + 4 H(+)(in) = ADP + phosphate + 5 H(+)(out). In terms of biological role, produces ATP from ADP in the presence of a proton gradient across the membrane. The catalytic sites are hosted primarily by the beta subunits. This Olimarabidopsis pumila (Dwarf rocket) protein is ATP synthase subunit beta, chloroplastic.